The primary structure comprises 312 residues: uncharacterized protein (312 aa).

This sequence belongs to the asfivirus CP312R family.

The protein resides in the virion. This is an uncharacterized protein from African swine fever virus (isolate Tick/Malawi/Lil 20-1/1983) (ASFV).